The following is a 138-amino-acid chain: Small ribosomal subunit protein uS11c (138 aa).

The tract at residues 1-21 (MTKSIPRIGSRRGGRIASRKN) is disordered. The segment covering 9–21 (GSRRGGRIASRKN) has biased composition (basic residues).

This sequence belongs to the universal ribosomal protein uS11 family. In terms of assembly, part of the 30S ribosomal subunit.

It localises to the plastid. The protein resides in the chloroplast. The chain is Small ribosomal subunit protein uS11c from Calycanthus floridus var. glaucus (Eastern sweetshrub).